A 264-amino-acid polypeptide reads, in one-letter code: RNA-binding protein pos-1 (264 aa).

The tract at residues 56–82 is disordered; it reads QDKETQNSASQPTSEQSLANRDPCTVP. Over residues 61–74 the composition is skewed to polar residues; that stretch reads QNSASQPTSEQSLA. 2 C3H1-type zinc fingers span residues 98–126 and 141–169; these read AFKT…HGVH and KYKT…HKIV. Residues Cys104, Cys113, Cys119, His123, Cys147, Cys156, Cys162, and His166 each contribute to the Zn(2+) site.

As to quaternary structure, monomer.

The protein resides in the cytoplasm. RNA-binding protein that coordinates cell fate specification and differentiation during early embryogenesis. Binds to a consensus pos-1 recognition element (PRE) consisting of the sequence 5'-UA(U 2-3)RGD(N 1-3)G-3', where R is any purine, D is A, G, or U, and N is any base. The PRE motif is found within the 3' untranslated region of many maternal transcripts required for early development. Binds to the 3' untranslated region (UTR) of Notch receptor homolog glp-1, thereby repressing glp-1 translation in the posterior blastomeres in the embryo. Binding to glp-1 3' UTR excludes cell fate regulator gld-1 binding to an overlapping binding site in the glp-1 3' UTR. Binds to the neg-1 3'UTR thereby opposing neg-1 expression and cytoplasmic polyadenylation of the neg-1 mRNA poly(A) tail promoted by gld-2 and gld-3. By inhibiting the cytoplasmic lengthening of neg-1 mRNA, restricts the accumulation of neg-1 protein and promotes endo-mesoderm development in anterior blastomeres. Essential for germline specification. This Caenorhabditis elegans protein is RNA-binding protein pos-1.